The following is a 192-amino-acid chain: Probable GTP-binding protein EngB (192 aa).

Residues S22–G192 enclose the EngB-type G domain. Residues G30–S37, G57–L61, D75–G78, T142–D145, and Y172–A174 contribute to the GTP site. S37 and T59 together coordinate Mg(2+).

This sequence belongs to the TRAFAC class TrmE-Era-EngA-EngB-Septin-like GTPase superfamily. EngB GTPase family. Requires Mg(2+) as cofactor.

Necessary for normal cell division and for the maintenance of normal septation. The protein is Probable GTP-binding protein EngB of Prosthecochloris aestuarii (strain DSM 271 / SK 413).